A 135-amino-acid chain; its full sequence is L-alanine exporter AlaE (135 aa).

Transmembrane regions (helical) follow at residues 9–29 (VATV…IAGM), 75–95 (DILA…LIAG), and 96–116 (ASFA…ILLA).

Belongs to the AlaE exporter family.

It localises to the cell inner membrane. Its function is as follows. Exports L-alanine. The chain is L-alanine exporter AlaE from Cereibacter sphaeroides (strain ATCC 17023 / DSM 158 / JCM 6121 / CCUG 31486 / LMG 2827 / NBRC 12203 / NCIMB 8253 / ATH 2.4.1.) (Rhodobacter sphaeroides).